The primary structure comprises 123 residues: MPTINQLIRKKRQSGATRKKSPALQKSPQKRGVCLQVKTKTPKKPNSALRKVAWVRLSNGQEVIAYIGGEGHNLQEHSIVLVQGGRVKDLPGVRYHIVRGALDCAAVKNRKQSRSRYGAKRPK.

A disordered region spans residues 1 to 45 (MPTINQLIRKKRQSGATRKKSPALQKSPQKRGVCLQVKTKTPKKP). Positions 8-21 (IRKKRQSGATRKKS) are enriched in basic residues.

This sequence belongs to the universal ribosomal protein uS12 family. Part of the 30S ribosomal subunit. Contacts proteins S8 and S17. May interact with IF1 in the 30S initiation complex.

With S4 and S5 plays an important role in translational accuracy. Functionally, interacts with and stabilizes bases of the 16S rRNA that are involved in tRNA selection in the A site and with the mRNA backbone. Located at the interface of the 30S and 50S subunits, it traverses the body of the 30S subunit contacting proteins on the other side and probably holding the rRNA structure together. The combined cluster of proteins S8, S12 and S17 appears to hold together the shoulder and platform of the 30S subunit. The protein is Small ribosomal subunit protein uS12 of Chlamydia muridarum (strain MoPn / Nigg).